A 303-amino-acid polypeptide reads, in one-letter code: Polyisoprenyl-teichoic acid--peptidoglycan teichoic acid transferase TagU (303 aa).

Over 1 to 4 (MKKK) the chain is Cytoplasmic. A helical; Signal-anchor for type II membrane protein transmembrane segment spans residues 5-25 (ILFWVLGILGVLIIGGGIYAY). Residues 26-303 (NVYSSVSNTL…KLRSHLEVTK (278 aa)) are Extracellular-facing.

Belongs to the LytR/CpsA/Psr (LCP) family.

The protein resides in the cell membrane. It participates in cell wall biogenesis. In terms of biological role, may catalyze the final step in cell wall teichoic acid biosynthesis, the transfer of the anionic cell wall polymers (APs) from their lipid-linked precursor to the cell wall peptidoglycan (PG). This chain is Polyisoprenyl-teichoic acid--peptidoglycan teichoic acid transferase TagU, found in Bacillus cereus (strain AH820).